We begin with the raw amino-acid sequence, 360 residues long: Protein Wnt-2 (360 aa).

The N-terminal stretch at 1–25 (MNAPLGGIWLWLPLLLTWLTPEVSS) is a signal peptide. Intrachain disulfides connect C76-C87, C127-C135, C137-C157, C206-C220, C208-C215, C278-C309, C294-C304, C308-C348, C324-C339, C326-C336, and C331-C332. S212 carries O-palmitoleoyl serine; by PORCN lipidation. A glycan (N-linked (GlcNAc...) asparagine) is linked at N295.

This sequence belongs to the Wnt family. In terms of processing, palmitoleoylation is required for efficient binding to frizzled receptors. Depalmitoleoylation leads to Wnt signaling pathway inhibition.

It localises to the secreted. It is found in the extracellular space. Its subcellular location is the extracellular matrix. Its function is as follows. Ligand for members of the frizzled family of seven transmembrane receptors. Functions in the canonical Wnt signaling pathway that results in activation of transcription factors of the TCF/LEF family. The chain is Protein Wnt-2 (WNT2) from Dasypus novemcinctus (Nine-banded armadillo).